A 308-amino-acid chain; its full sequence is MDFVAGAIGGVCGVAVGYPLDTVKVRIQTEPKYTGIWHCVRDTYHRERVWGFYRGLSLPVCTVSLVSSVSFGTYRHCLAHICRLRYGNPDAKPTKADITLSGCASGLVRVFLTSPTEVAKVRLQTQTQAQKQQRRLSASGPLAVPPMCPVPPACPEPKYRGPLHCLATVAREEGLCGLYKGSSALVLRDGHSFATYFLSYAVLCEWLSPAGHSRPDVPGVLVAGGCAGVLAWAVATPMDVIKSRLQADGQGQRRYRGLLHCMVTSVREEGPRVLFKGLVLNCCRAFPVNMVVFVAYEAVLRLARGLLT.

3 Solcar repeats span residues Met-1–His-80, Pro-93–Trp-206, and Pro-215–Leu-302. The next 6 helical transmembrane spans lie at Phe-3 to Val-23, Val-49 to Val-69, Ile-98 to Thr-116, Gly-190 to Ala-210, Val-217 to Pro-237, and Val-273 to Phe-293.

Belongs to the mitochondrial carrier (TC 2.A.29) family. As to expression, specifically expressed in liver.

The protein localises to the mitochondrion inner membrane. Its subcellular location is the mitochondrion outer membrane. The catalysed reaction is NAD(+)(in) = NAD(+)(out). It carries out the reaction acetyl-CoA(in) = acetyl-CoA(out). In terms of biological role, mitochondrial NAD(+) transporter that acts as a 'metabolic gate' in hepatic lipogenesis. Provides NAD(+) substrate to mitochondrial SIRT3 deacetylase and enables its NAD(+)-dependent activities in mitochondrial energy metabolism. This triggers downstream activation of PRKAA1/AMPK-alpha signaling cascade that negatively regulates sterol regulatory element-binding protein (SREBP) transcriptional activities and ATP-consuming lipogenesis to restore cellular energy balance. May transport other mitochondrial metabolites having an aromatic nucleotide and phosphate groups, such as acetyl-CoA. Does not transport amino acids. The transport mechanism remains to be elucidated. The polypeptide is Solute carrier family 25 member 47 (Homo sapiens (Human)).